The following is a 64-amino-acid chain: SPbeta prophage-derived uncharacterized protein YosJ (64 aa).

This chain is SPbeta prophage-derived uncharacterized protein YosJ (yosJ), found in Bacillus subtilis (strain 168).